The following is a 106-amino-acid chain: UPF0145 protein Tpet_0165 (106 aa).

This sequence belongs to the UPF0145 family.

The sequence is that of UPF0145 protein Tpet_0165 from Thermotoga petrophila (strain ATCC BAA-488 / DSM 13995 / JCM 10881 / RKU-1).